Consider the following 267-residue polypeptide: Coiled-coil domain-containing protein 90B, mitochondrial (267 aa).

Residues 1-47 constitute a mitochondrion transit peptide; that stretch reads MKGSQLYRHLSLQGNRLHLHLFQGKKLQLHPSQGHKGTAHRTWKKGF. Residues 142–175 adopt a coiled-coil conformation; the sequence is LEKSEFATLRAENEKMKIELEHVRQHLLNETNRI. Residues 244 to 266 traverse the membrane as a helical segment; the sequence is TVRYMAASVFTCLAIALGFYRLW.

This sequence belongs to the CCDC90 family.

The protein resides in the mitochondrion membrane. The chain is Coiled-coil domain-containing protein 90B, mitochondrial (ccdc90b) from Xenopus tropicalis (Western clawed frog).